Here is a 234-residue protein sequence, read N- to C-terminus: Transcriptional regulatory protein CseB (234 aa).

The 114-residue stretch at 6-119 (HVLFVEDDDV…VLVARIRAVL (114 aa)) folds into the Response regulatory domain. Residue Asp-55 is modified to 4-aspartylphosphate. Positions 140–234 (GGVLTFGDLE…VRGFGYKLKA (95 aa)) form a DNA-binding region, ompR/PhoB-type.

Phosphorylated by CseC.

The protein resides in the cytoplasm. Member of the two-component regulatory system CseB/CseC involved in the stability of the cell envelope. CseB activates transcription of RNA polymerase sigma-E factor, in response to changes in the cell envelope. This chain is Transcriptional regulatory protein CseB (cseB), found in Streptomyces coelicolor (strain ATCC BAA-471 / A3(2) / M145).